The following is a 154-amino-acid chain: MFKKMDKKAAQRIAMEYRAMISKESLFSIGQNSNNIYEWTAVIRGPDGTPYEGGMFNLSIKFPTDYPFKPPKFTFKTPIYHPNINDEGSICMNILKDKWTPALMVEKVLLSILLLLEKPNPDDPLVPEIGQLFKNNRFQFDQRAREFTARHANN.

One can recognise a UBC core domain in the interval 8–153 (KAAQRIAMEY…AREFTARHAN (146 aa)). Cys-91 (glycyl thioester intermediate) is an active-site residue.

Belongs to the ubiquitin-conjugating enzyme family.

It carries out the reaction S-ubiquitinyl-[E1 ubiquitin-activating enzyme]-L-cysteine + [E2 ubiquitin-conjugating enzyme]-L-cysteine = [E1 ubiquitin-activating enzyme]-L-cysteine + S-ubiquitinyl-[E2 ubiquitin-conjugating enzyme]-L-cysteine.. Its pathway is protein modification; protein ubiquitination. Accepts the ubiquitin from the E1 complex and catalyzes its covalent attachment to other proteins. The chain is Probable ubiquitin-conjugating enzyme E2 31 (UBC31) from Arabidopsis thaliana (Mouse-ear cress).